The primary structure comprises 858 residues: Taste receptor type 1 member 3 (858 aa).

The N-terminal stretch at 1–20 (MPGLAILGLSLAAFLELGMG) is a signal peptide. At 21–575 (SSLCLSQQFK…FLAWGEPAVL (555 aa)) the chain is on the extracellular side. N85, N130, N203, N264, N379, N387, N418, N439, and N482 each carry an N-linked (GlcNAc...) asparagine glycan. Residues 576 to 596 (SLLLLLCLVLGLTLAALGLFV) traverse the membrane as a helical segment. Residues 597–610 (HYWDSPLVQASGGS) are Cytoplasmic-facing. The chain crosses the membrane as a helical span at residues 611–631 (LFCFGLICLGLFCLSVLLFPG). At 632 to 644 (RPRSASCLAQQPM) the chain is on the extracellular side. Residues 645–665 (AHLPLTGCLSTLFLQAAEIFV) form a helical membrane-spanning segment. Residues 666 to 687 (ESELPLSWANWLCSYLRGPWAW) lie on the Cytoplasmic side of the membrane. A helical transmembrane segment spans residues 688 to 708 (LVVLLATLVEAALCAWYLMAF). At 709 to 735 (PPEVVTDWQVLPTEVLEHCRMRSWVSL) the chain is on the extracellular side. The chain crosses the membrane as a helical span at residues 736–756 (GLVHITNAVLAFLCFLGTFLV). The Cytoplasmic segment spans residues 757-767 (QSQPGRYNRAR). Residues 768-788 (GLTFAMLAYFIIWVSFVPLLA) traverse the membrane as a helical segment. Over 789–796 (NVQVAYQP) the chain is Extracellular. Residues 797–817 (AVQMGAILFCALGILATFHLP) form a helical membrane-spanning segment. At 818-858 (KCYVLLWLPELNTQEFFLGRSPKEASDGNSGSSEATRGHSE) the chain is on the cytoplasmic side. The interval 839–858 (PKEASDGNSGSSEATRGHSE) is disordered.

This sequence belongs to the G-protein coupled receptor 3 family. TAS1R subfamily. As to quaternary structure, forms homodimers or heterodimers with TAS1R1 and TAS1R2.

Its subcellular location is the cell membrane. Its function is as follows. Putative taste receptor. TAS1R1/TAS1R3 responds to the umami taste stimulus (the taste of monosodium glutamate) and also to most of the 20 standard L-amino acids, but not to their D-enantiomers or other compounds. TAS1R2/TAS1R3 recognizes diverse natural and synthetic sweeteners. TAS1R3 is essential for the recognition and response to the disaccharide trehalose. Sequence differences within and between species can significantly influence the selectivity and specificity of taste responses. The polypeptide is Taste receptor type 1 member 3 (Tas1r3) (Rattus norvegicus (Rat)).